Consider the following 33-residue polypeptide: Photosystem II reaction center protein Psb30 (33 aa).

A helical transmembrane segment spans residues 5–25 (LIGQLVTVALVVGAGPIIIGA).

This sequence belongs to the Psb30/Ycf12 family. As to quaternary structure, PSII is composed of 1 copy each of membrane proteins PsbA, PsbB, PsbC, PsbD, PsbE, PsbF, PsbH, PsbI, PsbJ, PsbK, PsbL, PsbM, PsbT, PsbX, PsbY, PsbZ, Psb30/Ycf12, peripheral proteins of the oxygen-evolving complex and a large number of cofactors. It forms dimeric complexes.

It localises to the plastid. It is found in the chloroplast thylakoid membrane. A core subunit of photosystem II (PSII), probably helps stabilize the reaction center. The chain is Photosystem II reaction center protein Psb30 from Ostreococcus tauri.